Here is a 475-residue protein sequence, read N- to C-terminus: Ribulose bisphosphate carboxylase large chain (475 aa).

Substrate-binding residues include Asn-123 and Thr-173. Residue Lys-175 is the Proton acceptor of the active site. Lys-177 serves as a coordination point for substrate. Residues Lys-201, Asp-203, and Glu-204 each coordinate Mg(2+). Lys-201 is subject to N6-carboxylysine. His-294 acts as the Proton acceptor in catalysis. Positions 295, 327, and 379 each coordinate substrate.

Belongs to the RuBisCO large chain family. Type I subfamily. Heterohexadecamer of 8 large chains and 8 small chains. Mg(2+) is required as a cofactor.

The protein localises to the plastid. It is found in the chloroplast. It carries out the reaction 2 (2R)-3-phosphoglycerate + 2 H(+) = D-ribulose 1,5-bisphosphate + CO2 + H2O. The enzyme catalyses D-ribulose 1,5-bisphosphate + O2 = 2-phosphoglycolate + (2R)-3-phosphoglycerate + 2 H(+). RuBisCO catalyzes two reactions: the carboxylation of D-ribulose 1,5-bisphosphate, the primary event in carbon dioxide fixation, as well as the oxidative fragmentation of the pentose substrate in the photorespiration process. Both reactions occur simultaneously and in competition at the same active site. This is Ribulose bisphosphate carboxylase large chain from Bigelowiella natans (Pedinomonas minutissima).